The chain runs to 323 residues: 1D-myo-inositol 2-acetamido-2-deoxy-alpha-D-glucopyranoside deacetylase 1 (323 aa).

Residues H30, D33, and H165 each coordinate Zn(2+).

This sequence belongs to the MshB deacetylase family. Requires Zn(2+) as cofactor.

It catalyses the reaction 1D-myo-inositol 2-acetamido-2-deoxy-alpha-D-glucopyranoside + H2O = 1D-myo-inositol 2-amino-2-deoxy-alpha-D-glucopyranoside + acetate. In terms of biological role, catalyzes the deacetylation of 1D-myo-inositol 2-acetamido-2-deoxy-alpha-D-glucopyranoside (GlcNAc-Ins) in the mycothiol biosynthesis pathway. This chain is 1D-myo-inositol 2-acetamido-2-deoxy-alpha-D-glucopyranoside deacetylase 1, found in Catenulispora acidiphila (strain DSM 44928 / JCM 14897 / NBRC 102108 / NRRL B-24433 / ID139908).